Reading from the N-terminus, the 30-residue chain is Natriuretic peptides A (30 aa).

A propeptide spanning residues 1 to 3 (APR) is cleaved from the precursor. A disulfide bond links Cys11 and Cys27.

It belongs to the natriuretic peptide family. In terms of processing, cleaved upon secretion to produce the functional hormone.

Its subcellular location is the secreted. Hormone playing a key role in cardiovascular homeostasis through regulation of natriuresis, diuresis, and vasodilation. Has a cGMP-stimulating activity. This is Natriuretic peptides A from Pelophylax ridibundus (Marsh frog).